The following is a 450-amino-acid chain: Phosphoglucosamine mutase 2 (450 aa).

Residue Ser-101 is the Phosphoserine intermediate of the active site. Residues Ser-101, Asp-245, Asp-247, and Asp-249 each contribute to the Mg(2+) site. A Phosphoserine modification is found at Ser-101.

The protein belongs to the phosphohexose mutase family. It depends on Mg(2+) as a cofactor. In terms of processing, activated by phosphorylation.

It catalyses the reaction alpha-D-glucosamine 1-phosphate = D-glucosamine 6-phosphate. Its function is as follows. Catalyzes the conversion of glucosamine-6-phosphate to glucosamine-1-phosphate. This Shewanella sp. (strain MR-4) protein is Phosphoglucosamine mutase 2.